A 472-amino-acid chain; its full sequence is Inhibitor of Apoptosis OPG037 (472 aa).

ANK repeat units lie at residues aspartate 97–alanine 126, histidine 130–asparagine 161, aspartate 233–lysine 263, phenylalanine 267–aspartate 297, tyrosine 322–aspartate 351, and methionine 353–serine 377.

Belongs to the orthopoxvirus OPG037 protein family. In terms of assembly, may interact with host caspase-9-Apaf-1 complex.

Its subcellular location is the host cytoplasm. Its function is as follows. Inhibits host apoptosis. Acts by associating with host apoptosome. This Homo sapiens (Human) protein is Inhibitor of Apoptosis OPG037 (OPG037).